Reading from the N-terminus, the 154-residue chain is Large ribosomal subunit protein uL13 (154 aa).

This sequence belongs to the universal ribosomal protein uL13 family. Part of the 50S ribosomal subunit.

Its function is as follows. This protein is one of the early assembly proteins of the 50S ribosomal subunit, although it is not seen to bind rRNA by itself. It is important during the early stages of 50S assembly. This is Large ribosomal subunit protein uL13 from Rhizobium leguminosarum bv. trifolii (strain WSM2304).